Consider the following 1086-residue polypeptide: NAD(P) transhydrogenase, mitochondrial (1086 aa).

A mitochondrion-targeting transit peptide spans 1–43; that stretch reads MANLLKTVVTGCSCPLLSNLGSCKGLRVKKDFLRTFYTHQELW. At 44-474 the chain is on the mitochondrial matrix side; that stretch reads CKAPVKPGIP…TITPFRKTMS (431 aa). The residue at position 70 (lysine 70) is an N6-acetyllysine. Residue lysine 117 is modified to N6-succinyllysine. NAD(+) is bound at residue 182-184; it reads RVT. At lysine 224 the chain carries N6-succinyllysine. Residues valine 237, 257–259, and glycine 287 contribute to the NAD(+) site; that span reads DTR. Lysine 294 is subject to N6-succinyllysine. Residues glutamate 300 and leucine 319 each contribute to the NAD(+) site. The residue at position 331 (lysine 331) is an N6-succinyllysine. Lysine 397 carries the post-translational modification N6-acetyllysine. A run of 4 helical transmembrane segments spans residues 475-493, 501-521, 527-546, and 558-578; these read TASAYTAGLTGILGLGIAA, MVTTFGLAGIVGYHTVWGVTP, LMSVTNAISGLTAVGGLALM, and GLAALAAFISSVNIAGGFLVT. Residues 579-595 lie on the Mitochondrial matrix side of the membrane; that stretch reads QRMLDMFKRPTDPPEYN. Helical transmembrane passes span 596-616, 622-642, 646-666, 672-691, and 702-722; these read YLYLLPAGTFVGGYLAALYSG, IMYLGSGLCCVGALAGLSTQG, LGNALGMIGVAGGLAATLGVL, LLAQMSGAMALGGTIGLTIA, and LVAAFHSLVGLAAVLTCIAEY. At 723–739 the chain is on the cytoplasmic side; that stretch reads IIEYPHFATDAAANLTK. 5 consecutive transmembrane segments (helical) span residues 740–760, 778–797, 801–819, 833–853, and 857–879; these read IVAYLGTYIGGVTFSGSLIAY, HLLNAGLLAASVGGIIPFMV, FTTGITCLGSVSALSAVMG, VVITVLNSYSGWALCAEGFLL, and LLTIVGALIGSSGAILSYIMCVA. The Mitochondrial matrix segment spans residues 880-1086; it reads MNRSLANVIL…QAKVRESYQK (207 aa). Residues tyrosine 933, 965–970, 1007–1011, 1026–1027, 1042–1049, and 1068–1069 contribute to the NADP(+) site; these read VAGRMP, GANDT, GM, KRSLGVGY, and DA. Lysine 1079 carries the N6-succinyllysine modification.

This sequence in the N-terminal section; belongs to the AlaDH/PNT family. The protein in the C-terminal section; belongs to the PNT beta subunit family. As to quaternary structure, homodimer. Widely expressed with expression most readily detectable in adrenal, heart, kidney, thyroid and adipose tissues.

It is found in the mitochondrion inner membrane. It catalyses the reaction NAD(+) + NADPH + H(+)(in) = NADH + NADP(+) + H(+)(out). Its function is as follows. The transhydrogenation between NADH and NADP is coupled to respiration and ATP hydrolysis and functions as a proton pump across the membrane. May play a role in reactive oxygen species (ROS) detoxification in the adrenal gland. This chain is NAD(P) transhydrogenase, mitochondrial (NNT), found in Homo sapiens (Human).